A 306-amino-acid chain; its full sequence is Pantothenate kinase (306 aa).

Gly90–Ser97 contacts ATP.

This sequence belongs to the prokaryotic pantothenate kinase family.

It is found in the cytoplasm. It carries out the reaction (R)-pantothenate + ATP = (R)-4'-phosphopantothenate + ADP + H(+). It participates in cofactor biosynthesis; coenzyme A biosynthesis; CoA from (R)-pantothenate: step 1/5. This Listeria monocytogenes serotype 4a (strain HCC23) protein is Pantothenate kinase.